A 101-amino-acid chain; its full sequence is Small ribosomal subunit protein uS14 (101 aa).

This sequence belongs to the universal ribosomal protein uS14 family. Part of the 30S ribosomal subunit. Contacts proteins S3 and S10.

In terms of biological role, binds 16S rRNA, required for the assembly of 30S particles and may also be responsible for determining the conformation of the 16S rRNA at the A site. The sequence is that of Small ribosomal subunit protein uS14 from Escherichia coli O139:H28 (strain E24377A / ETEC).